A 737-amino-acid polypeptide reads, in one-letter code: 1,4-alpha-glucan branching enzyme GlgB (737 aa).

Catalysis depends on D419, which acts as the Nucleophile. E472 (proton donor) is an active-site residue.

This sequence belongs to the glycosyl hydrolase 13 family. GlgB subfamily. Monomer.

The enzyme catalyses Transfers a segment of a (1-&gt;4)-alpha-D-glucan chain to a primary hydroxy group in a similar glucan chain.. Its pathway is glycan biosynthesis; glycogen biosynthesis. Functionally, catalyzes the formation of the alpha-1,6-glucosidic linkages in glycogen by scission of a 1,4-alpha-linked oligosaccharide from growing alpha-1,4-glucan chains and the subsequent attachment of the oligosaccharide to the alpha-1,6 position. This chain is 1,4-alpha-glucan branching enzyme GlgB, found in Mesorhizobium japonicum (strain LMG 29417 / CECT 9101 / MAFF 303099) (Mesorhizobium loti (strain MAFF 303099)).